Here is a 604-residue protein sequence, read N- to C-terminus: ATP-dependent RNA helicase DBP1 (604 aa).

Residues 1–79 (MSDGSGRYVP…RASGSGGFGG (79 aa)) are disordered. Residues 32–45 (SRYSGNGFFSSPNR) are compositionally biased toward polar residues. Positions 138–166 (TEFKSPPLDELLLENVELANFSKPTPVQK) match the Q motif motif. In terms of domain architecture, Helicase ATP-binding spans 169–358 (IPIVTKNRDL…RDFLKDYIFL (190 aa)). Position 182–189 (182–189 (AQTGSGKT)) interacts with ATP. A DEAD box motif is present at residues 302 to 305 (DEAD). The region spanning 386–529 (LLDILINEID…EVPQFLVNMV (144 aa)) is the Helicase C-terminal domain. A disordered region spans residues 535 to 591 (FGRGGRNSRTGSNRGRGSNTRDYRHSNKDDWGSLGSSRRGFRSNDNRGFGNNWGSSS). Over residues 541 to 552 (NSRTGSNRGRGS) the composition is skewed to low complexity. The segment covering 553 to 565 (NTRDYRHSNKDDW) has biased composition (basic and acidic residues).

Belongs to the DEAD box helicase family. DDX3/DED1 subfamily.

It is found in the cytoplasm. It catalyses the reaction ATP + H2O = ADP + phosphate + H(+). Functionally, ATP-binding RNA helicase involved in translation initiation. Remodels RNA in response to ADP and ATP concentrations by facilitating disruption, but also formation of RNA duplexes. Redundant to DED1, may be required in conditions in which DED1 expression is decreased. This is ATP-dependent RNA helicase DBP1 (DBP1) from Candida glabrata (strain ATCC 2001 / BCRC 20586 / JCM 3761 / NBRC 0622 / NRRL Y-65 / CBS 138) (Yeast).